A 290-amino-acid chain; its full sequence is Dehydrodolichyl diphosphate synthase CPT3 (290 aa).

D42 is an active-site residue.

The protein belongs to the UPP synthase family. It depends on Mg(2+) as a cofactor. In terms of tissue distribution, expressed in leaf trichomes and stem trichomes. Expressed at low levels in young leaves, stems and old leaves.

The protein localises to the cytoplasm. The protein resides in the cytosol. It carries out the reaction n isopentenyl diphosphate + (2E,6E)-farnesyl diphosphate = a di-trans,poly-cis-polyprenyl diphosphate + n diphosphate. Its function is as follows. Catalyzes cis-prenyl chain elongation to produce the polyprenyl backbone of dolichol, a glycosyl carrier-lipid required for the biosynthesis of several classes of glycoprotein. This Solanum lycopersicum (Tomato) protein is Dehydrodolichyl diphosphate synthase CPT3.